The primary structure comprises 62 residues: Conotoxin Pl168 (62 aa).

The signal sequence occupies residues 1-21 (MGMRMMFTVFLLVVLATTVVS). Positions 22 to 40 (FTLDRASDGANAAADLVAR) are excised as a propeptide. 2 cysteine pairs are disulfide-bonded: C46/C52 and C47/C61.

This sequence belongs to the conotoxin A superfamily. In terms of processing, both Pro-53 and Pro-62 are not in cis/trans isomerization. Expressed by the venom duct.

The protein localises to the secreted. In terms of biological role, probable neurotoxin with unknown target. Possibly targets ion channels. This Conus planorbis (Planorbis cone) protein is Conotoxin Pl168.